A 220-amino-acid chain; its full sequence is Ribosome biogenesis protein 15 (220 aa).

The tract at residues 1–82 (MVKSTSKTST…KQANEKKSKD (82 aa)) is disordered. The segment covering 9–30 (STKETVTKQPTEEKPIQEKEEL) has biased composition (basic and acidic residues). Residues 39–60 (SDEEDEKDEDEIEGLAASDDEQ) are compositionally biased toward acidic residues. The RRM domain occupies 91–169 (GIIYVSRLPH…HLLQVRVLPK (79 aa)).

As to quaternary structure, component of the pre-66S ribosomal particle. Interacts with NOP7 and RRP1.

Its subcellular location is the cytoplasm. It localises to the nucleus. The protein resides in the nucleolus. Involved in the biogenesis of the 60S ribosomal subunit. Required for pre-rRNA processing and cytokinesis. Associates with the precursors of the 25S and 5.8S rRNAs. This is Ribosome biogenesis protein 15 from Saccharomyces cerevisiae (strain ATCC 204508 / S288c) (Baker's yeast).